The following is an 897-amino-acid chain: Protein translocase subunit SecA (897 aa).

Residues Gln-87, 105-109, and Asp-512 contribute to the ATP site; that span reads GEGKT. Residues 846–897 form a disordered region; it reads EEEQQKQARKKMVFNLVDEDETSEPSKSKKLAGRNEPCPCGSGKKYKKCCGK. Zn(2+)-binding residues include Cys-883, Cys-885, Cys-894, and Cys-895.

The protein belongs to the SecA family. Monomer and homodimer. Part of the essential Sec protein translocation apparatus which comprises SecA, SecYEG and auxiliary proteins SecDF-YajC and YidC. Zn(2+) serves as cofactor.

The protein localises to the cell inner membrane. It is found in the cytoplasm. It carries out the reaction ATP + H2O + cellular proteinSide 1 = ADP + phosphate + cellular proteinSide 2.. Part of the Sec protein translocase complex. Interacts with the SecYEG preprotein conducting channel. Has a central role in coupling the hydrolysis of ATP to the transfer of proteins into and across the cell membrane, serving as an ATP-driven molecular motor driving the stepwise translocation of polypeptide chains across the membrane. This is Protein translocase subunit SecA from Geobacter sulfurreducens (strain ATCC 51573 / DSM 12127 / PCA).